We begin with the raw amino-acid sequence, 213 residues long: Thiopurine S-methyltransferase (213 aa).

S-adenosyl-L-methionine contacts are provided by tryptophan 10, leucine 45, glutamate 66, and arginine 121.

It belongs to the class I-like SAM-binding methyltransferase superfamily. TPMT family.

Its subcellular location is the cytoplasm. The enzyme catalyses S-adenosyl-L-methionine + a thiopurine = S-adenosyl-L-homocysteine + a thiopurine S-methylether.. This chain is Thiopurine S-methyltransferase, found in Aliivibrio fischeri (strain MJ11) (Vibrio fischeri).